A 232-amino-acid polypeptide reads, in one-letter code: tRNA (guanine-N(1)-)-methyltransferase (232 aa).

S-adenosyl-L-methionine contacts are provided by residues Gly-111 and 131–136 (IGDYIL).

Belongs to the RNA methyltransferase TrmD family. Homodimer.

It is found in the cytoplasm. The catalysed reaction is guanosine(37) in tRNA + S-adenosyl-L-methionine = N(1)-methylguanosine(37) in tRNA + S-adenosyl-L-homocysteine + H(+). In terms of biological role, specifically methylates guanosine-37 in various tRNAs. The polypeptide is tRNA (guanine-N(1)-)-methyltransferase (Bartonella bacilliformis (strain ATCC 35685 / KC583 / Herrer 020/F12,63)).